The sequence spans 179 residues: Putative 5'(3')-deoxyribonucleotidase (179 aa).

Aspartate 9 functions as the Nucleophile in the catalytic mechanism. The Mg(2+) site is built by aspartate 9, aspartate 11, and aspartate 135. The Proton donor role is filled by aspartate 11.

The protein belongs to the 5'(3')-deoxyribonucleotidase family. Requires Mg(2+) as cofactor.

Dephosphorylates the 5' and 2'(3')-phosphates of deoxyribonucleotides. The polypeptide is Putative 5'(3')-deoxyribonucleotidase (Staphylococcus epidermidis (strain ATCC 12228 / FDA PCI 1200)).